The sequence spans 212 residues: CRIB domain-containing protein RIC6 (212 aa).

The CRIB domain occupies 34–47; that stretch reads IGNPTDVKHVAHIG. Residues 51 to 212 form a disordered region; that stretch reads PSANATAPSW…MPQFDNRDDF (162 aa). The span at 53-65 shows a compositional bias: polar residues; that stretch reads ANATAPSWMTEFN. Residues 106 to 121 are compositionally biased toward basic and acidic residues; sequence AASEKGSPTKDKSSDK. The segment covering 192 to 202 has biased composition (polar residues); that stretch reads EYMSETGSVRS.

As to quaternary structure, interacts with ARAC11/ROP1. Expressed in flowers and pollen.

The protein localises to the cell membrane. Its function is as follows. Functions as a downstream effector of Rho-related GTP binding proteins of the 'Rho of Plants' (ROPs) family. Participates in the propagation of ROP GTPase signals in specific cellular responses. Is involved in pollen tube growth regulation through its interaction with ARAC11/ROP1. This Arabidopsis thaliana (Mouse-ear cress) protein is CRIB domain-containing protein RIC6 (RIC6).